Reading from the N-terminus, the 404-residue chain is Formate-dependent phosphoribosylglycinamide formyltransferase (404 aa).

N(1)-(5-phospho-beta-D-ribosyl)glycinamide is bound by residues glutamate 25–leucine 26 and glutamate 85. Residues arginine 118, lysine 159, serine 164–glutamine 169, glutamate 199–isoleucine 202, and glutamate 207 contribute to the ATP site. The ATP-grasp domain occupies arginine 123 to leucine 318. Residues glutamate 277 and glutamate 289 each coordinate Mg(2+). N(1)-(5-phospho-beta-D-ribosyl)glycinamide contacts are provided by residues aspartate 296, lysine 365, and arginine 372–arginine 373.

Belongs to the PurK/PurT family. Homodimer.

The enzyme catalyses N(1)-(5-phospho-beta-D-ribosyl)glycinamide + formate + ATP = N(2)-formyl-N(1)-(5-phospho-beta-D-ribosyl)glycinamide + ADP + phosphate + H(+). It participates in purine metabolism; IMP biosynthesis via de novo pathway; N(2)-formyl-N(1)-(5-phospho-D-ribosyl)glycinamide from N(1)-(5-phospho-D-ribosyl)glycinamide (formate route): step 1/1. In terms of biological role, involved in the de novo purine biosynthesis. Catalyzes the transfer of formate to 5-phospho-ribosyl-glycinamide (GAR), producing 5-phospho-ribosyl-N-formylglycinamide (FGAR). Formate is provided by PurU via hydrolysis of 10-formyl-tetrahydrofolate. The protein is Formate-dependent phosphoribosylglycinamide formyltransferase of Burkholderia pseudomallei (strain 1106a).